A 782-amino-acid polypeptide reads, in one-letter code: Probable transcription factor claV (782 aa).

Disordered regions lie at residues 1–37 (MPPR…VAKR), 49–128 (ALLT…GKDE), 156–180 (KSTS…NLTH), 717–745 (AGVG…PMPV), and 758–782 (GNTV…GGVD). Over residues 70-79 (RKTKKKKKKG) the composition is skewed to basic residues. Residues 86–102 (QTPVMTEPPQSSRTSPN) are compositionally biased toward polar residues. The segment covering 157 to 166 (STSAGASGSS) has biased composition (low complexity). The segment covering 723–740 (ADEDDEVEDDDEDEDEEV) has biased composition (acidic residues).

It is found in the nucleus. It functions in the pathway secondary metabolite biosynthesis; terpenoid biosynthesis. In terms of biological role, probable transcription factor; part of the gene cluster that mediates the biosynthesis of clavilactone A, a meroterpenoid that features a unique benzo-fused ten-membered carbocyclic ring unit with an alpha,beta-epoxy-gamma-lactone moiety, forming an intriguing 10/5/3 tricyclic nested skeleton. The chain is Probable transcription factor claV from Ampulloclitocybe clavipes (Club foot).